We begin with the raw amino-acid sequence, 165 residues long: Type 3 secretion system regulator YopR (165 aa).

This sequence belongs to the YopR family.

Its subcellular location is the secreted. In terms of biological role, may be involved in the regulation of the assembly of the type III secretion system (T3SS), also called injectisome, which is used to inject bacterial effector proteins into eukaryotic host cells. May control the secretion and/or polymerization of YscF/SctF, the principal component of the needle filament, thereby impacting the assembly of the T3SS. Involved in pathogenesis. The polypeptide is Type 3 secretion system regulator YopR (Yersinia pestis).